The following is a 381-amino-acid chain: UDP-N-acetylglucosamine--N-acetylmuramyl-(pentapeptide) pyrophosphoryl-undecaprenol N-acetylglucosamine transferase (381 aa).

Residues 10–12 (TGG), Asn124, Arg165, Ser190, Ile245, and Gln290 each bind UDP-N-acetyl-alpha-D-glucosamine. The interval 361 to 381 (WGSPAGQERPGHGPVRPPDLA) is disordered.

Belongs to the glycosyltransferase 28 family. MurG subfamily.

Its subcellular location is the cell inner membrane. It carries out the reaction di-trans,octa-cis-undecaprenyl diphospho-N-acetyl-alpha-D-muramoyl-L-alanyl-D-glutamyl-meso-2,6-diaminopimeloyl-D-alanyl-D-alanine + UDP-N-acetyl-alpha-D-glucosamine = di-trans,octa-cis-undecaprenyl diphospho-[N-acetyl-alpha-D-glucosaminyl-(1-&gt;4)]-N-acetyl-alpha-D-muramoyl-L-alanyl-D-glutamyl-meso-2,6-diaminopimeloyl-D-alanyl-D-alanine + UDP + H(+). The protein operates within cell wall biogenesis; peptidoglycan biosynthesis. Its function is as follows. Cell wall formation. Catalyzes the transfer of a GlcNAc subunit on undecaprenyl-pyrophosphoryl-MurNAc-pentapeptide (lipid intermediate I) to form undecaprenyl-pyrophosphoryl-MurNAc-(pentapeptide)GlcNAc (lipid intermediate II). In Anaeromyxobacter sp. (strain Fw109-5), this protein is UDP-N-acetylglucosamine--N-acetylmuramyl-(pentapeptide) pyrophosphoryl-undecaprenol N-acetylglucosamine transferase.